The primary structure comprises 707 residues: Toxin RTX-I translocation ATP-binding protein (707 aa).

The Peptidase C39 domain occupies 1-125 (MDFYREEDYG…SLYQGKLILV (125 aa)). Residue His-83 is part of the active site. Residues 154–436 (FIETLIVSIF…LAQLWQDFQQ (283 aa)) enclose the ABC transmembrane type-1 domain. 5 helical membrane-spanning segments follow: residues 158–178 (LIVSIFLQIFALITPLFFQVV), 188–208 (FSTLNVITVALAIVVLFEIVL), 295–315 (LVILGSLPFYMGWSIFISPIL), 387–407 (VVMVITLWLGAHLVISGDLSI), and 410–430 (LIAFNMLSGQVIAPVIRLAQL). Residues 468–703 (ITFRNIRFRY…PNGLYHYLHQ (236 aa)) form the ABC transporter domain. 502–509 (GRSGSGKS) lines the ATP pocket.

Belongs to the ABC transporter superfamily. Protein-1 exporter (TC 3.A.1.109) family. As to quaternary structure, homodimer.

It localises to the cell membrane. In terms of biological role, involved in the transport of the toxin RTX-I as well as that of RTX-II. This is Toxin RTX-I translocation ATP-binding protein (apxIB) from Actinobacillus pleuropneumoniae (Haemophilus pleuropneumoniae).